The following is a 284-amino-acid chain: Actin-like protein ARP10 (284 aa).

Belongs to the actin family. ARP10 subfamily. Self-associates. Component of the dynactin complex composed of at least ARP1, JNM1, NIP100 and ARP10. Dynactin comprises a short rod of the ARP1 filament attached to ARP10 at its pointed-end and probably associated with the capping protein at its barbed-end. The rod is implicated in dynein cargo binding. A sidearm formed by NIP100 projects from the ARP1 filament and is implicated in motor binding. Interacts with ARP1 and JNM1.

The protein resides in the cytoplasm. The protein localises to the cytoskeleton. Pointed-end-associated component of the dynactin complex which assists cytoplasmic dynein by increasing its processivity and by regulation of its cargo binding. The dynactin complex is required for the spindle translocation late in anaphase and is involved in a cell wall synthesis checkpoint. May regulate the association of the dynactin complex with the plasma membrane. The sequence is that of Actin-like protein ARP10 (ARP10) from Saccharomyces cerevisiae (strain ATCC 204508 / S288c) (Baker's yeast).